Reading from the N-terminus, the 42-residue chain is Omega-theraphotoxin-Asp3a (42 aa).

3 cysteine pairs are disulfide-bonded: C1/C16, C8/C21, and C15/C30.

This sequence belongs to the neurotoxin 14 (magi-1) family. 08 (Ltx-4) subfamily. Expressed by the venom gland.

It is found in the secreted. Inhibits voltage-gated calcium channels (Cav) in rat cerebellar granule cells. This Aphonopelma sp. (American tarantula) protein is Omega-theraphotoxin-Asp3a.